Consider the following 2062-residue polypeptide: Ankyrin repeat domain-containing protein 12 (2062 aa).

Disordered regions lie at residues 1-119 and 145-188; these read MPKS…GNKK and ARDN…GETP. Residues 9–20 show a composition bias toward polar residues; it reads PIQSENSDSDSN. Composition is skewed to basic and acidic residues over residues 41-57 and 100-117; these read PKIE…EKSS and YSEK…EAGN. The segment covering 145–172 has biased composition (polar residues); the sequence is ARDNSPDSTPNHPSQTTPAQKKTPSSSS. Residue serine 149 is modified to Phosphoserine. The segment covering 173–187 has biased composition (basic and acidic residues); sequence RQKDKVNKRNERGET. ANK repeat units follow at residues 184 to 213, 217 to 246, and 250 to 280; these read RGET…NVNV, AGWT…DVNT, and DDDT…PFQA. Disordered regions lie at residues 301–338, 409–501, 538–577, 609–683, 727–788, 812–1073, 1097–1227, and 1328–1350; these read KREV…TEKD, KSFK…TRIT, ISTG…MSLQ, QKDF…DSAK, EKNI…FTSL, EKHI…LVND, KHKE…RPPV, and EESN…KPEV. A compositionally biased stretch (acidic residues) spans 306–318; it reads LSDDDESYTDSEE. Composition is skewed to polar residues over residues 319–328 and 437–454; these read AQSVNPSSVD and KKIS…NSDM. A compositionally biased stretch (basic and acidic residues) spans 455–467; sequence QTKKEYVVSGEHK. Positions 468 to 480 are enriched in basic residues; sequence QKGKVKRKLKNQN. Residues 481 to 498 are compositionally biased toward basic and acidic residues; that stretch reads KNKENQELKQEKEGKENT. Serine 543 carries the phosphoserine modification. The span at 565-575 shows a compositional bias: polar residues; that stretch reads TCLSPGSSEMS. Composition is skewed to basic and acidic residues over residues 609 to 631, 639 to 649, 658 to 683, 727 to 784, 812 to 969, 977 to 1037, 1061 to 1072, and 1103 to 1157; these read QKDF…DHSP, TLKKMDKEGKT, KERE…DSAK, EKNI…KDSE, EKHI…DKES, HIQE…KDKI, KDTRPKEKRLVN, and KQKE…KQPK. Serine 630 is subject to Phosphoserine. Serine 861 carries the post-translational modification Phosphoserine. Positions 1161–1189 are enriched in polar residues; sequence SNRSQSVDTKNVMTLGKSSFVSDNSLNRS. Residues 1200–1213 are compositionally biased toward low complexity; the sequence is SSRSVSMISVASSE. The span at 1328–1344 shows a compositional bias: polar residues; that stretch reads EESNQGSLLTVPGDTSP. Phosphoserine is present on serine 1401. Disordered stretches follow at residues 1721–1744 and 1756–1795; these read NAED…NTMA and LLSE…VPQP. The segment covering 1729 to 1744 has biased composition (polar residues); it reads NQIPQRMTRNKANTMA.

Interacts with the PAS region of the p160 coactivators.

The protein localises to the nucleus. May recruit HDACs to the p160 coactivators/nuclear receptor complex to inhibit ligand-dependent transactivation. In Homo sapiens (Human), this protein is Ankyrin repeat domain-containing protein 12 (ANKRD12).